The chain runs to 316 residues: Myb-related protein 306 (316 aa).

HTH myb-type domains lie at 9-65 (KIGV…RPGI) and 66-116 (KRGD…KKKL). 2 consecutive DNA-binding regions (H-T-H motif) follow at residues 37 to 61 (WRAI…TNYL) and 89 to 112 (WAAI…NTHL). Disordered regions lie at residues 119 to 144 (LQSP…SKGQ), 168 to 193 (KTSS…QAST), and 209 to 230 (KKSP…TTTS). Basic and acidic residues predominate over residues 135–144 (DSDKSVSKGQ). Residues 181 to 193 (VQTTQPRPFQAST) show a composition bias toward polar residues. A compositionally biased stretch (low complexity) spans 216–230 (SSTSQAGSSESTTTS).

As to expression, expressed in flowers, leaves and weakly in seed pods.

It is found in the nucleus. Transcription factor. This Antirrhinum majus (Garden snapdragon) protein is Myb-related protein 306.